Reading from the N-terminus, the 393-residue chain is uncharacterized protein (393 aa).

This is an uncharacterized protein from Treponema pallidum (strain Nichols).